Reading from the N-terminus, the 41-residue chain is Large ribosomal subunit protein bL36 (41 aa).

Belongs to the bacterial ribosomal protein bL36 family.

This chain is Large ribosomal subunit protein bL36, found in Methylocella silvestris (strain DSM 15510 / CIP 108128 / LMG 27833 / NCIMB 13906 / BL2).